A 485-amino-acid chain; its full sequence is Glucose-6-phosphate 1-dehydrogenase (485 aa).

Residues Arg-46, 89 to 90, and Lys-144 contribute to the NADP(+) site; that span reads DI. Substrate is bound by residues His-174, Lys-178, Glu-212, and Asp-231. His-236 serves as the catalytic Proton acceptor. Position 334 (Lys-334) interacts with substrate.

Belongs to the glucose-6-phosphate dehydrogenase family.

The catalysed reaction is D-glucose 6-phosphate + NADP(+) = 6-phospho-D-glucono-1,5-lactone + NADPH + H(+). The protein operates within carbohydrate degradation; pentose phosphate pathway; D-ribulose 5-phosphate from D-glucose 6-phosphate (oxidative stage): step 1/3. Its function is as follows. Catalyzes the oxidation of glucose 6-phosphate to 6-phosphogluconolactone. The polypeptide is Glucose-6-phosphate 1-dehydrogenase (Zymomonas mobilis subsp. mobilis (strain ATCC 31821 / ZM4 / CP4)).